The primary structure comprises 327 residues: Sphingomyelinase D (327 aa).

The N-terminal stretch at 1–23 is a signal peptide; it reads MQPLTRTICALFCLLLTLPLTFG. The active site involves His-52. Residues Glu-72, Asp-74, and Asp-117 each coordinate Mg(2+). The SMD-tail motif lies at 320-327; it reads VTGADKLW.

This sequence belongs to the sphingomyelinase D/phospholipase D family. The cofactor is Mg(2+).

Its subcellular location is the secreted. The catalysed reaction is a sphingomyelin + H2O = an N-acylsphing-4-enine 1-phosphate + choline + H(+). Catalyzes the hydrolysis of sphingomyelin. Sphingomyelinases D are produced by some spider in their venoms, but also by arthropods such as ticks, or pathogenic bacteria and fungi. They might play a role in pathogenicity through different mechanisms, such as membrane destabilization and host cell penetration, but also pulmonary inflammation and cutaneous lesions. The chain is Sphingomyelinase D from Paracoccidioides brasiliensis (strain Pb03).